A 412-amino-acid polypeptide reads, in one-letter code: MVEQAKLSDPNAEYTMRDLSAETIDITNPRGGVRDAEITDVQTTMVDGNYPWILVRVYTDAGVVGTGEAYWGGGDTAIIERMKPFLVGENPLDIDRLYEHLVQKMSGEGSVSGKVISAISGIEIALHDVAGKLLDVPAYQLVGGKYRDEVRVYCDLHTEDEANPQACAEEGVRVVEELGYDAIKFDLDVPSGHEKDRANRHLRNPEIDHKVEIVEAVTEAVGDRADVAFDCHWSFTGGSAKRLASELEDYDVWWLEDPVPPENHDVQKLVTQSTTTPIAVGENVYRKFGQRTLLEPQAVDIIAPDLPRVGGMRETRKIADLADMYYIPVAMHNVSSPIGTMASAQVAAAIPNSLALEYHSYQLGWWEDLVEEDDLIQNGHMEIPEKPGLGLTLDLDAVEAHMVEGETLFDEE.

Homooctamer.

It catalyses the reaction D-xylonate = 2-dehydro-3-deoxy-D-arabinonate + H2O. Functionally, NADP-dependent D-xylose dehydrogenase involved in the degradation of D-xylose, a major component of hemicelluloses such as xylan. Catalyzes the third reaction in the xylose utilization pathway through dehydratation of D-xylonate into 2-dehydro-3-deoxy-D-xylonate. This Haloferax volcanii (strain ATCC 29605 / DSM 3757 / JCM 8879 / NBRC 14742 / NCIMB 2012 / VKM B-1768 / DS2) (Halobacterium volcanii) protein is D-xylonate dehydratase.